We begin with the raw amino-acid sequence, 379 residues long: Mannitol-1-phosphate 5-dehydrogenase (379 aa).

Residue A3–G14 participates in NAD(+) binding.

Belongs to the mannitol dehydrogenase family.

The enzyme catalyses D-mannitol 1-phosphate + NAD(+) = beta-D-fructose 6-phosphate + NADH + H(+). The sequence is that of Mannitol-1-phosphate 5-dehydrogenase from Anoxybacillus flavithermus (strain DSM 21510 / WK1).